The chain runs to 397 residues: Enoyl-[acyl-carrier-protein] reductase [NADH] (397 aa).

NAD(+) contacts are provided by residues 47–52 (GASTGY), 73–74 (LE), 110–111 (DA), and 138–139 (LA). Tyr-224 provides a ligand contact to substrate. Catalysis depends on Tyr-234, which acts as the Proton donor. NAD(+) contacts are provided by residues Lys-243 and 272–274 (LVT).

Belongs to the TER reductase family. Monomer.

The catalysed reaction is a 2,3-saturated acyl-[ACP] + NAD(+) = a (2E)-enoyl-[ACP] + NADH + H(+). Its pathway is lipid metabolism; fatty acid biosynthesis. Its function is as follows. Involved in the final reduction of the elongation cycle of fatty acid synthesis (FAS II). Catalyzes the reduction of a carbon-carbon double bond in an enoyl moiety that is covalently linked to an acyl carrier protein (ACP). In Methylobacillus flagellatus (strain ATCC 51484 / DSM 6875 / VKM B-1610 / KT), this protein is Enoyl-[acyl-carrier-protein] reductase [NADH].